The primary structure comprises 374 residues: Tuliposide A-converting enzyme b1, amyloplastic (374 aa).

An amyloplast-targeting transit peptide spans 1–68; that stretch reads MSVALFCGPP…TNSSLSPSPT (68 aa). Ser-226 (acyl-ester intermediate) is an active-site residue. Residues Asp-316 and His-348 each act as charge relay system in the active site.

The protein belongs to the AB hydrolase superfamily. As to quaternary structure, homodimer. In terms of tissue distribution, highly expressed in pistil and bulb scales. Lower expression in stem, and barely detected in root, leaf, petal and stamen.

The protein resides in the plastid. It localises to the amyloplast. It catalyses the reaction 6-tuliposide A = tulipalin A + D-glucose. Its function is as follows. Lactone-forming carboxylesterases, specifically catalyzing intramolecular transesterification, but not hydrolysis. Involved in the biosynthesis of tulipalins, defensive chemicals that show antimicrobial activities against a broad range of strains of bacteria and fungi. Substrates are 6-tuliposide A &gt; 6-tuliposide B. The sequence is that of Tuliposide A-converting enzyme b1, amyloplastic (TCEA-B1) from Tulipa gesneriana (Garden tulip).